Reading from the N-terminus, the 46-residue chain is uncharacterized protein (46 aa).

This is an uncharacterized protein from Haemophilus influenzae (strain ATCC 51907 / DSM 11121 / KW20 / Rd).